We begin with the raw amino-acid sequence, 61 residues long: MLYFYHINILIKERKYILIYSYLNRENYQLITEESKKNDIPSIVSTGYFFAFSFPITNVLE.

This is an uncharacterized protein from Saccharomyces cerevisiae (strain ATCC 204508 / S288c) (Baker's yeast).